Reading from the N-terminus, the 162-residue chain is uncharacterized protein (162 aa).

Belongs to the M.jannaschii MJ0150/MJ0739/MJ0745/MJ1460/MJ1642 family.

This is an uncharacterized protein from Methanocaldococcus jannaschii (strain ATCC 43067 / DSM 2661 / JAL-1 / JCM 10045 / NBRC 100440) (Methanococcus jannaschii).